Consider the following 38-residue polypeptide: Large ribosomal subunit protein bL36 (38 aa).

The protein belongs to the bacterial ribosomal protein bL36 family.

This is Large ribosomal subunit protein bL36 from Synechococcus sp. (strain JA-2-3B'a(2-13)) (Cyanobacteria bacterium Yellowstone B-Prime).